The sequence spans 464 residues: Cysteine--tRNA ligase (464 aa).

Cysteine 28 is a Zn(2+) binding site. The 'HIGH' region motif lies at 30-40 (ITAYDFCHIGH). Residues cysteine 210, histidine 235, and glutamate 239 each contribute to the Zn(2+) site. A 'KMSKS' region motif is present at residues 267–271 (KMSKS). Lysine 270 contributes to the ATP binding site.

It belongs to the class-I aminoacyl-tRNA synthetase family. Monomer. The cofactor is Zn(2+).

It localises to the cytoplasm. It carries out the reaction tRNA(Cys) + L-cysteine + ATP = L-cysteinyl-tRNA(Cys) + AMP + diphosphate. The protein is Cysteine--tRNA ligase of Buchnera aphidicola subsp. Baizongia pistaciae (strain Bp).